A 247-amino-acid chain; its full sequence is tRNA pseudouridine synthase A (247 aa).

Asp-52 (nucleophile) is an active-site residue. A substrate-binding site is contributed by Tyr-113.

It belongs to the tRNA pseudouridine synthase TruA family. As to quaternary structure, homodimer.

It carries out the reaction uridine(38/39/40) in tRNA = pseudouridine(38/39/40) in tRNA. Its function is as follows. Formation of pseudouridine at positions 38, 39 and 40 in the anticodon stem and loop of transfer RNAs. This chain is tRNA pseudouridine synthase A, found in Sinorhizobium medicae (strain WSM419) (Ensifer medicae).